A 219-amino-acid polypeptide reads, in one-letter code: Probable nicotinate-nucleotide adenylyltransferase (219 aa).

This sequence belongs to the NadD family.

It carries out the reaction nicotinate beta-D-ribonucleotide + ATP + H(+) = deamido-NAD(+) + diphosphate. Its pathway is cofactor biosynthesis; NAD(+) biosynthesis; deamido-NAD(+) from nicotinate D-ribonucleotide: step 1/1. Catalyzes the reversible adenylation of nicotinate mononucleotide (NaMN) to nicotinic acid adenine dinucleotide (NaAD). This Pseudoalteromonas atlantica (strain T6c / ATCC BAA-1087) protein is Probable nicotinate-nucleotide adenylyltransferase.